Consider the following 70-residue polypeptide: Large ribosomal subunit protein eL38 (70 aa).

It belongs to the eukaryotic ribosomal protein eL38 family.

The polypeptide is Large ribosomal subunit protein eL38 (rpl-38) (Caenorhabditis elegans).